The chain runs to 157 residues: Dihydrofolate reductase type 15 (157 aa).

A DHFR domain is found at 2–156 (KLSLMAAISK…INYSYQIWQK (155 aa)).

This sequence belongs to the dihydrofolate reductase family. As to quaternary structure, homodimer.

It catalyses the reaction (6S)-5,6,7,8-tetrahydrofolate + NADP(+) = 7,8-dihydrofolate + NADPH + H(+). The protein operates within cofactor biosynthesis; tetrahydrofolate biosynthesis; 5,6,7,8-tetrahydrofolate from 7,8-dihydrofolate: step 1/1. Its function is as follows. Key enzyme in folate metabolism. Catalyzes an essential reaction for de novo glycine and purine synthesis, and for DNA precursor synthesis. This is Dihydrofolate reductase type 15 (dhfrXV) from Escherichia coli.